We begin with the raw amino-acid sequence, 1027 residues long: 2-oxoglutarate dehydrogenase, mitochondrial (1027 aa).

Residues Arg-315, Asp-413, Asn-446, Ile-448, and Gln-674 each contribute to the thiamine diphosphate site. Positions 413, 446, and 448 each coordinate Mg(2+).

Belongs to the alpha-ketoglutarate dehydrogenase family. As to quaternary structure, homodimer. Component of the 2-oxoglutarate dehydrogenase complex. It depends on thiamine diphosphate as a cofactor. The cofactor is Mg(2+).

Its subcellular location is the mitochondrion matrix. The enzyme catalyses N(6)-[(R)-lipoyl]-L-lysyl-[protein] + 2-oxoglutarate + H(+) = N(6)-[(R)-S(8)-succinyldihydrolipoyl]-L-lysyl-[protein] + CO2. Functionally, the 2-oxoglutarate dehydrogenase complex catalyzes the overall conversion of 2-oxoglutarate to succinyl-CoA and CO(2). It contains multiple copies of three enzymatic components: 2-oxoglutarate dehydrogenase (E1), dihydrolipoamide succinyltransferase (E2) and lipoamide dehydrogenase (E3). The chain is 2-oxoglutarate dehydrogenase, mitochondrial (ogdh-1) from Caenorhabditis briggsae.